A 303-amino-acid chain; its full sequence is N-acetyl-D-glucosamine kinase (303 aa).

Residues 4-11 and 133-140 contribute to the ATP site; these read GFDIGGTK and GVGGGLVL. Residues His157, Cys177, Cys179, and Cys184 each contribute to the Zn(2+) site.

The protein belongs to the ROK (NagC/XylR) family. NagK subfamily.

The enzyme catalyses N-acetyl-D-glucosamine + ATP = N-acetyl-D-glucosamine 6-phosphate + ADP + H(+). It functions in the pathway cell wall biogenesis; peptidoglycan recycling. Functionally, catalyzes the phosphorylation of N-acetyl-D-glucosamine (GlcNAc) derived from cell-wall degradation, yielding GlcNAc-6-P. The protein is N-acetyl-D-glucosamine kinase of Salmonella choleraesuis (strain SC-B67).